The primary structure comprises 161 residues: 2-C-methyl-D-erythritol 2,4-cyclodiphosphate synthase (161 aa).

The a divalent metal cation site is built by Asp10 and His12. 4-CDP-2-C-methyl-D-erythritol 2-phosphate is bound by residues 10 to 12 (DVH) and 36 to 37 (HS). His44 is a binding site for a divalent metal cation. Residues 58–60 (DIG), 63–67 (FSDTD), and Arg144 contribute to the 4-CDP-2-C-methyl-D-erythritol 2-phosphate site.

The protein belongs to the IspF family. In terms of assembly, homotrimer. A divalent metal cation is required as a cofactor.

It carries out the reaction 4-CDP-2-C-methyl-D-erythritol 2-phosphate = 2-C-methyl-D-erythritol 2,4-cyclic diphosphate + CMP. Its pathway is isoprenoid biosynthesis; isopentenyl diphosphate biosynthesis via DXP pathway; isopentenyl diphosphate from 1-deoxy-D-xylulose 5-phosphate: step 4/6. Involved in the biosynthesis of isopentenyl diphosphate (IPP) and dimethylallyl diphosphate (DMAPP), two major building blocks of isoprenoid compounds. Catalyzes the conversion of 4-diphosphocytidyl-2-C-methyl-D-erythritol 2-phosphate (CDP-ME2P) to 2-C-methyl-D-erythritol 2,4-cyclodiphosphate (ME-CPP) with a corresponding release of cytidine 5-monophosphate (CMP). This chain is 2-C-methyl-D-erythritol 2,4-cyclodiphosphate synthase, found in Burkholderia ambifaria (strain MC40-6).